The following is a 550-amino-acid chain: U-box domain-containing protein 40 (550 aa).

A compositionally biased stretch (basic and acidic residues) spans 19–29 (KSDNLSRRESL). Positions 19–55 (KSDNLSRRESLAGKSKWRTSLSRSSSSSSSNNNSPTK) are disordered. A compositionally biased stretch (low complexity) spans 38-52 (SLSRSSSSSSSNNNS). In terms of domain architecture, U-box spans 57–127 (EIPAEFLCPI…HSWCERRCFP (71 aa)). ARM repeat units lie at residues 260–299 (ESSR…NLSL), 301–340 (KSNK…SLAL), 342–381 (DENK…HLSL), 383–420 (QSNR…NMAS), and 422–464 (PVSR…GLSH).

It catalyses the reaction S-ubiquitinyl-[E2 ubiquitin-conjugating enzyme]-L-cysteine + [acceptor protein]-L-lysine = [E2 ubiquitin-conjugating enzyme]-L-cysteine + N(6)-ubiquitinyl-[acceptor protein]-L-lysine.. It functions in the pathway protein modification; protein ubiquitination. Its function is as follows. Functions as an E3 ubiquitin ligase. The sequence is that of U-box domain-containing protein 40 (PUB40) from Arabidopsis thaliana (Mouse-ear cress).